The following is a 355-amino-acid chain: Probable aldo-keto reductase 3 (355 aa).

Tyr-70 acts as the Proton donor in catalysis. Residue His-138 coordinates substrate. Residue 217–227 (SPLGRGFFSSG) coordinates NADP(+).

It belongs to the aldo/keto reductase family.

The sequence is that of Probable aldo-keto reductase 3 from Oryza sativa subsp. indica (Rice).